We begin with the raw amino-acid sequence, 90 residues long: Cuticle protein 9.5 (90 aa).

Functionally, component of the cuticle of migratory locust which contains more than 100 different structural proteins. The sequence is that of Cuticle protein 9.5 from Locusta migratoria (Migratory locust).